The chain runs to 218 residues: Probable nicotinate-nucleotide adenylyltransferase (218 aa).

The protein belongs to the NadD family.

It catalyses the reaction nicotinate beta-D-ribonucleotide + ATP + H(+) = deamido-NAD(+) + diphosphate. It participates in cofactor biosynthesis; NAD(+) biosynthesis; deamido-NAD(+) from nicotinate D-ribonucleotide: step 1/1. Its function is as follows. Catalyzes the reversible adenylation of nicotinate mononucleotide (NaMN) to nicotinic acid adenine dinucleotide (NaAD). The chain is Probable nicotinate-nucleotide adenylyltransferase from Burkholderia cenocepacia (strain ATCC BAA-245 / DSM 16553 / LMG 16656 / NCTC 13227 / J2315 / CF5610) (Burkholderia cepacia (strain J2315)).